Here is a 139-residue protein sequence, read N- to C-terminus: MKPAARRRARECAVQALYSWQLSKNDIADVEHQFLSEQDVKDVDITYFRELLAGVATQAEKLDQLMAPFLSRQIEELGQVEKAILRLAMFELSKREDVPYKVAINEAIELAKVFGAEDSHKFVNGVLDKAAPSVRKGKK.

It belongs to the NusB family.

Its function is as follows. Involved in transcription antitermination. Required for transcription of ribosomal RNA (rRNA) genes. Binds specifically to the boxA antiterminator sequence of the ribosomal RNA (rrn) operons. The chain is Transcription antitermination protein NusB from Pectobacterium carotovorum subsp. carotovorum (strain PC1).